We begin with the raw amino-acid sequence, 362 residues long: Homoserine O-acetyltransferase FUB5 (362 aa).

Residues 12 to 335 form the AB hydrolase-1 domain; sequence NVMIICHALS…VSDDGHDAFL (324 aa). The active-site Nucleophile is serine 110. A disordered region spans residues 195–232; sequence RFGRDTGNKKKTQQQDSKTIPNNGTPIHSQGGADETPV. Residues 208–222 are compositionally biased toward polar residues; that stretch reads QQDSKTIPNNGTPIH. Active-site residues include aspartate 302 and histidine 331.

It belongs to the AB hydrolase superfamily. MetX family.

It carries out the reaction L-homoserine + acetyl-CoA = O-acetyl-L-homoserine + CoA. It functions in the pathway mycotoxin biosynthesis. In terms of biological role, homoserine O-acetyltransferase; part of the gene cluster that mediates the biosynthesis of fusaric acid, a mycotoxin with low to moderate toxicity to animals and humans, but with high phytotoxic properties. L-aspartate is suggested as fusaric acid amino acid precursor that is activated and further processed to O-acetyl-L-homoserine by cluster enzymes aspartate kinase FUB3 and homoserine O-acetyltransferase FUB5, as well as enzymes of the primary metabolism. The polyketide synthase (PKS) FUB1 generates the triketide trans-2-hexenal which is presumptively released by the hydrolase FUB4 and linked to the NRPS-bound amino acid precursor by NAD(P)-dependent dehydrogenase FUB6. FUB1, FUB4, and the non-canonical NRPS Fub8 may form an enzyme complex. Further processing of the NRPS-bound intermediate might be carried out by FUB6 and the O-acetylhomoserine FUB7, enabling a spontaneous electrocyclization to close the carbon backbone of fusaric acid. Dihydrofusaric acid is likely to be released via reduction by the thioester reductase (TR) domain of FUB8 whereupon the final oxidation to fusaric acid may (also) be performed by the FMN-dependent dehydrogenase FUB9. In Fusarium oxysporum f. sp. lycopersici (strain 4287 / CBS 123668 / FGSC 9935 / NRRL 34936) (Fusarium vascular wilt of tomato), this protein is Homoserine O-acetyltransferase FUB5.